A 457-amino-acid chain; its full sequence is Ribosome biogenesis protein YTM1 (457 aa).

A ubiquitin-like (UBL) domain region spans residues 8–89 (VKVKFFTREK…ETTLTVEYTR (82 aa)). The segment at 99–457 (NFNNDDWVSA…INKGDNIFKN (359 aa)) is sufficient for interaction with ERB1 and association with 66S pre-ribosomes. 7 WD repeats span residues 101 to 140 (NNDD…EKQY), 142 to 180 (GHTG…GSVS), 203 to 241 (GHKA…MTAI), 282 to 322 (SHTG…CIDT), 324 to 363 (TTSY…SAKI), 370 to 410 (GHKN…PMYT), and 421 to 457 (GVND…IFKN). The disordered stretch occupies residues 172 to 191 (TKNDDGSVSNNTGDENDEEN).

This sequence belongs to the WD repeat WDR12/YTM1 family. Component of the NOP7 complex, composed of ERB1, NOP7 and YTM1. The complex is held together by ERB1, which interacts with NOP7 via its N-terminal domain and with YTM1 via a high-affinity interaction between the seven-bladed beta-propeller domains of the 2 proteins. The NOP7 complex associates with the 66S pre-ribosome. Interacts (via UBL domain) with MDN1 (via VWFA/MIDAS domain).

The protein localises to the nucleus. It is found in the nucleolus. The protein resides in the nucleoplasm. Component of the NOP7 complex, which is required for maturation of the 25S and 5.8S ribosomal RNAs and formation of the 60S ribosome. This Candida glabrata (strain ATCC 2001 / BCRC 20586 / JCM 3761 / NBRC 0622 / NRRL Y-65 / CBS 138) (Yeast) protein is Ribosome biogenesis protein YTM1.